The primary structure comprises 227 residues: NAD(P)H-quinone oxidoreductase subunit K, chloroplastic (227 aa).

Residues Cys43, Cys44, Cys108, and Cys139 each contribute to the [4Fe-4S] cluster site.

Belongs to the complex I 20 kDa subunit family. In terms of assembly, NDH is composed of at least 16 different subunits, 5 of which are encoded in the nucleus. [4Fe-4S] cluster is required as a cofactor.

It is found in the plastid. It localises to the chloroplast thylakoid membrane. The catalysed reaction is a plastoquinone + NADH + (n+1) H(+)(in) = a plastoquinol + NAD(+) + n H(+)(out). It catalyses the reaction a plastoquinone + NADPH + (n+1) H(+)(in) = a plastoquinol + NADP(+) + n H(+)(out). Functionally, NDH shuttles electrons from NAD(P)H:plastoquinone, via FMN and iron-sulfur (Fe-S) centers, to quinones in the photosynthetic chain and possibly in a chloroplast respiratory chain. The immediate electron acceptor for the enzyme in this species is believed to be plastoquinone. Couples the redox reaction to proton translocation, and thus conserves the redox energy in a proton gradient. The protein is NAD(P)H-quinone oxidoreductase subunit K, chloroplastic of Pelargonium hortorum (Common geranium).